Reading from the N-terminus, the 340-residue chain is Coproporphyrin III ferrochelatase (340 aa).

Ser-52 and Tyr-121 together coordinate Fe-coproporphyrin III. Fe(2+) contacts are provided by His-181 and Glu-264.

It belongs to the ferrochelatase family.

The protein localises to the cytoplasm. It carries out the reaction Fe-coproporphyrin III + 2 H(+) = coproporphyrin III + Fe(2+). Its pathway is porphyrin-containing compound metabolism; protoheme biosynthesis. Its function is as follows. Involved in coproporphyrin-dependent heme b biosynthesis. Catalyzes the insertion of ferrous iron into coproporphyrin III to form Fe-coproporphyrin III. This is Coproporphyrin III ferrochelatase from Mycolicibacterium smegmatis (strain ATCC 700084 / mc(2)155) (Mycobacterium smegmatis).